Consider the following 491-residue polypeptide: Cytochrome P450 2K3 (491 aa).

C434 contributes to the heme binding site.

It belongs to the cytochrome P450 family. The cofactor is heme.

The protein localises to the endoplasmic reticulum membrane. It is found in the microsome membrane. The enzyme catalyses an organic molecule + reduced [NADPH--hemoprotein reductase] + O2 = an alcohol + oxidized [NADPH--hemoprotein reductase] + H2O + H(+). The polypeptide is Cytochrome P450 2K3 (cyp2k3) (Oncorhynchus mykiss (Rainbow trout)).